Reading from the N-terminus, the 552-residue chain is T-box transcription factor TBX4 (552 aa).

A compositionally biased stretch (basic and acidic residues) spans 1–14 (MLQDKGLSESEEAF). The tract at residues 1-50 (MLQDKGLSESEEAFRAPGPALGEASNTSTTNAPEPALATPGLSGAALSSP) is disordered. The segment at residues 76 to 256 (LHEKELWKKF…NNPFAKGFRG (181 aa)) is a DNA-binding region (T-box). Residue Ser-514 is modified to Phosphoserine.

Its subcellular location is the nucleus. Transcriptional regulator that has an essential role in the organogenesis of lungs, pelvis, and hindlimbs. This Mus musculus (Mouse) protein is T-box transcription factor TBX4 (Tbx4).